A 604-amino-acid polypeptide reads, in one-letter code: Solute carrier family 23 member 1 (604 aa).

A disordered region spans residues 1 to 29 (MKAQEDPGSSKQHECPDSAGTSTRDQQAP). At 1-59 (MKAQEDPGSSKQHECPDSAGTSTRDQQAPLPAEPKFDMLYKIEDVPPWYLCILLGFQHY) the chain is on the cytoplasmic side. A helical transmembrane segment spans residues 60-80 (LTCFSGTIAVPFLLAEALCVG). The Extracellular segment spans residues 81–88 (RDQHMISQ). The helical transmembrane segment at 89–109 (LIGTIFTCVGITTLIQTTVGI) threads the bilayer. A topological domain (cytoplasmic) is located at residue arginine 110. Residues 111-131 (LPLFQASAFAFLVPAKAILAL) form a helical membrane-spanning segment. Residues 132 to 166 (ERWKCPPEEEIYGNWSMPLNTSHIWHPRIREVQGA) are Extracellular-facing. 2 N-linked (GlcNAc...) asparagine glycosylation sites follow: asparagine 145 and asparagine 151. Residues 167-187 (IMVSSVVEVVIGLLGLPGALL) form a helical membrane-spanning segment. The Cytoplasmic segment spans residues 188-214 (SYIGPLTVTPTVSLIGLSVFQAAGDRA). A helical membrane pass occupies residues 215–232 (GSHWGISACSILLIVLFS). The Extracellular portion of the chain corresponds to 233–236 (QYLR). Positions 237–250 (NLTFLLPVYRWGKG) form an intramembrane region, helical. Residues 251-257 (LTLFRIQ) are Extracellular-facing. A helical membrane pass occupies residues 258–278 (IFKMFPIVLAIMTVWLLCYVL). The Cytoplasmic segment spans residues 279–319 (TLTDVLPADPTVYGFQARTDARGDIMAISPWIRIPYPCQWG). The helical transmembrane segment at 320–340 (LPTVTVAAVLGMFSATLAGII) threads the bilayer. Residues 341-365 (ESIGDYYACARLAGAPPPPVHAINR) lie on the Extracellular side of the membrane. A helical transmembrane segment spans residues 366–386 (GIFTEGVCCIIAGLLGTGNGS). Residues 387 to 409 (TSSSPNIGVLGITKVGSRRVVQY) lie on the Cytoplasmic side of the membrane. The helical transmembrane segment at 410–430 (GAGIMLILGAIGKFTALFASL) threads the bilayer. Topologically, residues 431 to 433 (PDP) are extracellular. A helical transmembrane segment spans residues 434-454 (ILGGMFCTLFGMITAVGLSNL). The Cytoplasmic portion of the chain corresponds to 455–464 (QFVDMNSSRN). A helical transmembrane segment spans residues 465-485 (LFVLGFSMFFGLTLPNYLDSN). The Extracellular portion of the chain corresponds to 486-497 (PGAINTGVPEVD). A helical transmembrane segment spans residues 498-518 (QILTVLLTTEMFVGGCLAFIL). Over 519–604 (DNTVPGSPEE…TETGSVCTKV (86 aa)) the chain is Cytoplasmic. Residue threonine 597 is modified to Phosphothreonine. Serine 599 carries the phosphoserine modification. Phosphothreonine is present on threonine 602.

Belongs to the nucleobase:cation symporter-2 (NCS2) (TC 2.A.40) family. Phosphorylated. In terms of tissue distribution, highly expressed in the straight segment of proximal tubules in the kidney, in intestine and liver. Detected in epithelial cells of the bronchiole and epididymis.

It localises to the cell membrane. It carries out the reaction L-ascorbate(out) + 2 Na(+)(out) = L-ascorbate(in) + 2 Na(+)(in). It catalyses the reaction urate(out) + 2 Na(+)(out) = urate(in) + 2 Na(+)(in). Functionally, sodium/ascorbate cotransporter. Mediates electrogenic uptake of vitamin C, with a stoichiometry of 2 Na(+) for each ascorbate. Has retained some ancestral activity toward nucleobases such as urate, an oxidized purine. Low-affinity high-capacity sodium:urate cotransporter, may regulate serum urate levels by serving as a renal urate re-absorber. The protein is Solute carrier family 23 member 1 (Slc23a1) of Rattus norvegicus (Rat).